Here is a 94-residue protein sequence, read N- to C-terminus: Lipolysis-activating peptide 1-beta chain (94 aa).

Positions 1–19 (MKILAVVLISVIVLNTANG) are cleaved as a signal peptide. One can recognise an LCN-type CS-alpha/beta domain in the interval 20–87 (ENYYPQKYTN…FFNALESQCP (68 aa)). Cystine bridges form between Cys-34/Cys-56, Cys-42/Cys-66, and Cys-46/Cys-68.

Belongs to the long (3 C-C) scorpion toxin superfamily. Homodimer; disulfide-linked or monomer (edited version) or heterodimer of an alpha chain (AC D9U299 or AC D9U2A4) and this beta chain (non-edited version). Expressed by the venom gland.

The protein resides in the secreted. In terms of biological role, the homodimer inhibits HMG-CoA reductase (HMGCR) (32% of inhibition produced by 0.6 uM), a glycoprotein involved in the control of cholesterol biosynthesis. The inhibitory effects of bumarsin are seen at much lower concentrations (0.6 uM) than that for statins such as atorvastatin (5 mM) and simvastatin (10 uM). In addition to inhibition of HMG-CoA reductase, this protein lowers cholesterol levels by inducing steroid hormone synthesis via StAR, and by increasing reverse cholesterol transport mediated by the induction of ABCA1 and APOA1. Functionally, the heterodimer non-edited LVP1 induces lipolysis in rat adipocytes. Induction of lipolysis by LVP1 appears to be mediated through the beta-2 adrenergic receptor pathway (ADRB2). Its function is as follows. The monomer edited version, similar to alpha-toxins, may modulate voltage-gated sodium channels (Nav) and may block voltage-gated potassium channels (Kv). In Lychas mucronatus (Chinese swimming scorpion), this protein is Lipolysis-activating peptide 1-beta chain.